Here is a 325-residue protein sequence, read N- to C-terminus: Homeobox protein Hox-A1a (325 aa).

Positions 187-192 match the Antp-type hexapeptide motif; sequence TFDWMK. Disordered stretches follow at residues 194-215 and 264-325; these read KRNP…PNTV and RMKQ…YPSN. A DNA-binding region (homeobox) is located at residues 212 to 271; that stretch reads PNTVRTNFTTKQLTELEKEFHFNKYLTRARRVEIAAALQLNETQVKIWFQNRRMKQKKRE. Residues 285–300 show a composition bias toward basic and acidic residues; it reads SGERNQEKVEDGESEK. The segment covering 301 to 317 has biased composition (low complexity); it reads SVSAPSTPSPTSSTVSS.

It belongs to the Antp homeobox family. Labial subfamily.

The protein resides in the nucleus. Functionally, sequence-specific transcription factor which is part of a developmental regulatory system that provides cells with specific positional identities on the anterior-posterior axis. This chain is Homeobox protein Hox-A1a (hoxa1a), found in Takifugu rubripes (Japanese pufferfish).